The chain runs to 345 residues: Beta-2-glycoprotein 1 (345 aa).

A signal peptide spans 1-19; the sequence is MPPPALVLLLGFLCHVAIA. Sushi domains follow at residues 21 to 81, 82 to 139, 140 to 202, and 203 to 262; these read RTCP…KCMP, RVCP…VCAP, ITCP…ECRE, and VRCP…SCKA. 11 disulfide bridges follow: cysteine 23-cysteine 66, cysteine 51-cysteine 79, cysteine 84-cysteine 124, cysteine 110-cysteine 137, cysteine 142-cysteine 188, cysteine 174-cysteine 200, cysteine 205-cysteine 248, cysteine 234-cysteine 260, cysteine 264-cysteine 315, cysteine 300-cysteine 325, and cysteine 307-cysteine 345. O-linked (GalNAc...) threonine glycosylation is present at threonine 33. An N-linked (GlcNAc...) asparagine glycan is attached at asparagine 92. N-linked (GlcNAc...) asparagine glycans are attached at residues asparagine 162, asparagine 183, and asparagine 193. N-linked (GlcNAc...) asparagine glycosylation is present at asparagine 253. A sushi-like region spans residues 263 to 345; sequence SCKLSIKRAT…KTDASDVKPC (83 aa).

In terms of tissue distribution, expressed by the liver and secreted in plasma.

It is found in the secreted. Its function is as follows. Binds to various kinds of negatively charged substances such as heparin, phospholipids, and dextran sulfate. May prevent activation of the intrinsic blood coagulation cascade by binding to phospholipids on the surface of damaged cells. The polypeptide is Beta-2-glycoprotein 1 (APOH) (Bos taurus (Bovine)).